Reading from the N-terminus, the 717-residue chain is DNA-directed RNA polymerase subunit beta' (717 aa).

Zn(2+)-binding residues include cysteine 71, cysteine 73, cysteine 91, and cysteine 94. Residues aspartate 481, aspartate 483, and aspartate 485 each contribute to the Mg(2+) site.

It belongs to the RNA polymerase beta' chain family. RpoC1 subfamily. In terms of assembly, in plastids the minimal PEP RNA polymerase catalytic core is composed of four subunits: alpha, beta, beta', and beta''. When a (nuclear-encoded) sigma factor is associated with the core the holoenzyme is formed, which can initiate transcription. It depends on Mg(2+) as a cofactor. The cofactor is Zn(2+).

The protein resides in the plastid. Its subcellular location is the chloroplast. It catalyses the reaction RNA(n) + a ribonucleoside 5'-triphosphate = RNA(n+1) + diphosphate. Its function is as follows. DNA-dependent RNA polymerase catalyzes the transcription of DNA into RNA using the four ribonucleoside triphosphates as substrates. The polypeptide is DNA-directed RNA polymerase subunit beta' (Chlorokybus atmophyticus (Soil alga)).